A 239-amino-acid polypeptide reads, in one-letter code: 4-hydroxy-tetrahydrodipicolinate reductase (239 aa).

NAD(+)-binding positions include 9–14, 78–80, and 104–107; these read GINGKI, GTT, and APNF. The Proton donor/acceptor role is filled by His-134. His-135 is a binding site for (S)-2,3,4,5-tetrahydrodipicolinate. The active-site Proton donor is Lys-138. Residue 144-145 coordinates (S)-2,3,4,5-tetrahydrodipicolinate; it reads GT.

The protein belongs to the DapB family.

The protein resides in the cytoplasm. It carries out the reaction (S)-2,3,4,5-tetrahydrodipicolinate + NAD(+) + H2O = (2S,4S)-4-hydroxy-2,3,4,5-tetrahydrodipicolinate + NADH + H(+). It catalyses the reaction (S)-2,3,4,5-tetrahydrodipicolinate + NADP(+) + H2O = (2S,4S)-4-hydroxy-2,3,4,5-tetrahydrodipicolinate + NADPH + H(+). The protein operates within amino-acid biosynthesis; L-lysine biosynthesis via DAP pathway; (S)-tetrahydrodipicolinate from L-aspartate: step 4/4. Functionally, catalyzes the conversion of 4-hydroxy-tetrahydrodipicolinate (HTPA) to tetrahydrodipicolinate. This Coxiella burnetii (strain CbuG_Q212) (Coxiella burnetii (strain Q212)) protein is 4-hydroxy-tetrahydrodipicolinate reductase.